The following is a 276-amino-acid chain: Type II pantothenate kinase (276 aa).

8–15 (DAGGTLTK) contacts ATP. Glu76 (proton acceptor) is an active-site residue. ATP is bound by residues Thr105, 127-131 (GGTIM), Phe143, and Ser230.

The protein belongs to the type II pantothenate kinase family. In terms of assembly, homodimer.

Its subcellular location is the cytoplasm. The catalysed reaction is (R)-pantothenate + ATP = (R)-4'-phosphopantothenate + ADP + H(+). It functions in the pathway cofactor biosynthesis; coenzyme A biosynthesis; CoA from (R)-pantothenate: step 1/5. In terms of biological role, catalyzes the phosphorylation of pantothenate (Pan), the first step in CoA biosynthesis. The chain is Type II pantothenate kinase from Bacillus cereus (strain AH820).